The chain runs to 589 residues: Probable arginine--tRNA ligase, cytoplasmic (589 aa).

Residues 121–123 (SPN), histidine 132, tyrosine 332, aspartate 336, and glutamine 360 each bind L-arginine. Residues 121–132 (SPNIAKPFHAGH) carry the 'HIGH' region motif. The interval 469–483 (DTGPYLQYAHARLCS) is interaction with tRNA.

The protein belongs to the class-I aminoacyl-tRNA synthetase family.

The protein localises to the cytoplasm. Its subcellular location is the cytosol. It carries out the reaction tRNA(Arg) + L-arginine + ATP = L-arginyl-tRNA(Arg) + AMP + diphosphate. Its function is as follows. Forms part of a macromolecular complex that catalyzes the attachment of specific amino acids to cognate tRNAs during protein synthesis. The sequence is that of Probable arginine--tRNA ligase, cytoplasmic (argS1) from Dictyostelium discoideum (Social amoeba).